The sequence spans 595 residues: Miltiradiene synthase KSL1, chloroplastic (595 aa).

A chloroplast-targeting transit peptide spans 1 to 47 (MSLAFNPAATAFSGNGARSRRENFPVKHVTVRGFPMITNKSSFAVKC). Residues D334, D338, N478, and E486 each contribute to the Mg(2+) site. The short motif at 334 to 338 (DDFFD) is the DDXXD motif element.

Belongs to the terpene synthase family. Requires Mg(2+) as cofactor.

It is found in the plastid. It localises to the chloroplast. The enzyme catalyses (+)-copalyl diphosphate = miltiradiene + diphosphate. It participates in secondary metabolite biosynthesis; terpenoid biosynthesis. Its function is as follows. Involved in tanshinone biosynthesis in hairy roots. Catalyzes the conversion of copalyl diphosphate (CPP) to miltiradiene. In Salvia miltiorrhiza (Chinese sage), this protein is Miltiradiene synthase KSL1, chloroplastic.